The following is a 334-amino-acid chain: S-adenosylmethionine decarboxylase proenzyme (334 aa).

Phe-7 is a substrate binding site. Catalysis depends on residues Glu-8 and Glu-11. Glu-67 is a binding site for substrate. Catalysis depends on Ser-68, which acts as the Schiff-base intermediate with substrate; via pyruvic acid. The residue at position 68 (Ser-68) is a Pyruvic acid (Ser); by autocatalysis. The active-site Proton donor; for catalytic activity is the Cys-82. Residue Phe-223 coordinates substrate. Residues Ser-229 and His-243 each act as proton acceptor; for processing activity in the active site. Residue Glu-247 participates in substrate binding. The residue at position 298 (Ser-298) is a Phosphoserine.

The protein belongs to the eukaryotic AdoMetDC family. As to quaternary structure, heterotetramer of two alpha and two beta chains. Requires pyruvate as cofactor. Is synthesized initially as an inactive proenzyme. Formation of the active enzyme involves a self-maturation process in which the active site pyruvoyl group is generated from an internal serine residue via an autocatalytic post-translational modification. Two non-identical subunits are generated from the proenzyme in this reaction, and the pyruvate is formed at the N-terminus of the alpha chain, which is derived from the carboxyl end of the proenzyme. The post-translation cleavage follows an unusual pathway, termed non-hydrolytic serinolysis, in which the side chain hydroxyl group of the serine supplies its oxygen atom to form the C-terminus of the beta chain, while the remainder of the serine residue undergoes an oxidative deamination to produce ammonia and the pyruvoyl group blocking the N-terminus of the alpha chain.

The enzyme catalyses S-adenosyl-L-methionine + H(+) = S-adenosyl 3-(methylsulfanyl)propylamine + CO2. It functions in the pathway amine and polyamine biosynthesis; S-adenosylmethioninamine biosynthesis; S-adenosylmethioninamine from S-adenosyl-L-methionine: step 1/1. Functionally, essential for biosynthesis of the polyamines spermidine and spermine. Promotes maintenance and self-renewal of embryonic stem cells, by maintaining spermine levels. This Mesocricetus auratus (Golden hamster) protein is S-adenosylmethionine decarboxylase proenzyme (AMD1).